The primary structure comprises 238 residues: Uridylate kinase (238 aa).

12 to 15 lines the ATP pocket; sequence KLSG. Residue G54 coordinates UMP. ATP-binding residues include G55 and R59. Residues D74 and 135–142 each bind UMP; that span reads TGNPFFTT. T162, Y168, and D171 together coordinate ATP.

Belongs to the UMP kinase family. In terms of assembly, homohexamer.

It is found in the cytoplasm. It catalyses the reaction UMP + ATP = UDP + ADP. The protein operates within pyrimidine metabolism; CTP biosynthesis via de novo pathway; UDP from UMP (UMPK route): step 1/1. With respect to regulation, inhibited by UTP. Catalyzes the reversible phosphorylation of UMP to UDP. The chain is Uridylate kinase from Bordetella parapertussis (strain 12822 / ATCC BAA-587 / NCTC 13253).